The chain runs to 100 residues: Aspartyl/glutamyl-tRNA(Asn/Gln) amidotransferase subunit C (100 aa).

The protein belongs to the GatC family. As to quaternary structure, heterotrimer of A, B and C subunits.

The enzyme catalyses L-glutamyl-tRNA(Gln) + L-glutamine + ATP + H2O = L-glutaminyl-tRNA(Gln) + L-glutamate + ADP + phosphate + H(+). It carries out the reaction L-aspartyl-tRNA(Asn) + L-glutamine + ATP + H2O = L-asparaginyl-tRNA(Asn) + L-glutamate + ADP + phosphate + 2 H(+). Allows the formation of correctly charged Asn-tRNA(Asn) or Gln-tRNA(Gln) through the transamidation of misacylated Asp-tRNA(Asn) or Glu-tRNA(Gln) in organisms which lack either or both of asparaginyl-tRNA or glutaminyl-tRNA synthetases. The reaction takes place in the presence of glutamine and ATP through an activated phospho-Asp-tRNA(Asn) or phospho-Glu-tRNA(Gln). The polypeptide is Aspartyl/glutamyl-tRNA(Asn/Gln) amidotransferase subunit C (Rickettsia rickettsii (strain Sheila Smith)).